Here is a 328-residue protein sequence, read N- to C-terminus: Probable voltage-gated potassium channel subunit beta (328 aa).

Trp21, Gln27, and Asp49 together coordinate NADP(+). Tyr54 functions as the Proton donor/acceptor in the catalytic mechanism. Ser152, Gln178, Trp207, Ser208, Pro209, Leu210, Ala211, Lys218, Arg229, Gly285, Thr287, Gln291, Glu294, and Asn295 together coordinate NADP(+).

It belongs to the shaker potassium channel beta subunit family. Forms heteromultimeric complexes with potassium channel alpha subunits. As to expression, expressed in late-developed leaves with the highest expression in the flag leaf (at protein level).

Functionally, probable accessory potassium channel protein which modulates the activity of the pore-forming alpha subunit. The chain is Probable voltage-gated potassium channel subunit beta (KOB1) from Oryza sativa subsp. japonica (Rice).